The sequence spans 325 residues: Methionyl-tRNA formyltransferase (325 aa).

Residue 112–115 coordinates (6S)-5,6,7,8-tetrahydrofolate; the sequence is SLLP.

This sequence belongs to the Fmt family.

The catalysed reaction is L-methionyl-tRNA(fMet) + (6R)-10-formyltetrahydrofolate = N-formyl-L-methionyl-tRNA(fMet) + (6S)-5,6,7,8-tetrahydrofolate + H(+). Its function is as follows. Attaches a formyl group to the free amino group of methionyl-tRNA(fMet). The formyl group appears to play a dual role in the initiator identity of N-formylmethionyl-tRNA by promoting its recognition by IF2 and preventing the misappropriation of this tRNA by the elongation apparatus. In Roseiflexus sp. (strain RS-1), this protein is Methionyl-tRNA formyltransferase.